We begin with the raw amino-acid sequence, 328 residues long: tRNA dimethylallyltransferase (328 aa).

19–26 is a binding site for ATP; that stretch reads GPTASGKT. A substrate-binding site is contributed by 21–26; it reads TASGKT. 3 interaction with substrate tRNA regions span residues 50-53, 174-178, and 257-262; these read DSAL, QRIQR, and RCVGYR.

The protein belongs to the IPP transferase family. As to quaternary structure, monomer. Requires Mg(2+) as cofactor.

The enzyme catalyses adenosine(37) in tRNA + dimethylallyl diphosphate = N(6)-dimethylallyladenosine(37) in tRNA + diphosphate. Its function is as follows. Catalyzes the transfer of a dimethylallyl group onto the adenine at position 37 in tRNAs that read codons beginning with uridine, leading to the formation of N6-(dimethylallyl)adenosine (i(6)A). The chain is tRNA dimethylallyltransferase from Leptothrix cholodnii (strain ATCC 51168 / LMG 8142 / SP-6) (Leptothrix discophora (strain SP-6)).